The sequence spans 284 residues: Asialoglycoprotein receptor 1 (284 aa).

The Cytoplasmic portion of the chain corresponds to 1 to 39; it reads MTKDYQDFQHLDNENDHHQLQRGPPPAPRLLQRLCSGFR. An Endocytosis signal motif is present at residues 5–8; sequence YQDF. Residue Cys35 is the site of S-palmitoyl cysteine attachment. A helical; Signal-anchor for type II membrane protein membrane pass occupies residues 40–60; that stretch reads LFLLSLGLSILLLVVVCVITS. Residues 58–122 are a coiled coil; the sequence is ITSQNSQLRE…EDLREDHSRL (65 aa). Topologically, residues 61–284 are extracellular; sequence QNSQLREDLR…VCETELGKAN (224 aa). N-linked (GlcNAc...) asparagine glycans are attached at residues Asn75, Asn78, and Asn146. Cystine bridges form between Cys153–Cys164, Cys181–Cys276, and Cys254–Cys268. The 118-residue stretch at 160–277 folds into the C-type lectin domain; the sequence is YEGSCYWFSS…CRRPYRWVCE (118 aa). Positions 190, 196, 215, 239, 241, 242, 252, 253, 264, 265, and 277 each coordinate Ca(2+).

Interacts with LASS2. Post-translationally, phosphorylated on a cytoplasmic Ser residue. As to expression, expressed exclusively in hepatic parenchymal cells.

It localises to the membrane. Mediates the endocytosis of plasma glycoproteins to which the terminal sialic acid residue on their complex carbohydrate moieties has been removed. The receptor recognizes terminal galactose and N-acetylgalactosamine units. After ligand binding to the receptor, the resulting complex is internalized and transported to a sorting organelle, where receptor and ligand are disassociated. The receptor then returns to the cell membrane surface. This chain is Asialoglycoprotein receptor 1 (Asgr1), found in Rattus norvegicus (Rat).